Consider the following 359-residue polypeptide: Protein RecA (359 aa).

Residue 77–84 (GPESSGKT) participates in ATP binding.

Belongs to the RecA family.

It localises to the cytoplasm. Can catalyze the hydrolysis of ATP in the presence of single-stranded DNA, the ATP-dependent uptake of single-stranded DNA by duplex DNA, and the ATP-dependent hybridization of homologous single-stranded DNAs. It interacts with LexA causing its activation and leading to its autocatalytic cleavage. The chain is Protein RecA from Azospirillum lipoferum (strain 4B).